The sequence spans 489 residues: Tandem C2 domains nuclear protein (489 aa).

Phosphoserine is present on residues S82, S155, S167, S173, and S210. Positions D189–I214 are disordered. Over residues F191–S210 the composition is skewed to low complexity. Residues T213 and T215 each carry the phosphothreonine modification. At S217 the chain carries Phosphoserine. 2 C2 domains span residues D222–I341 and A343–K470. The Nuclear localization signal signature appears at R446 to K448.

The protein resides in the nucleus. This is Tandem C2 domains nuclear protein (Tc2n) from Mus musculus (Mouse).